A 208-amino-acid polypeptide reads, in one-letter code: Uracil phosphoribosyltransferase (208 aa).

5-phospho-alpha-D-ribose 1-diphosphate contacts are provided by residues Arg-78, Arg-103, and 130 to 138 (DPMLATGGS). Uracil is bound by residues Ile-193 and 198–200 (GDA). A 5-phospho-alpha-D-ribose 1-diphosphate-binding site is contributed by Asp-199.

Belongs to the UPRTase family. It depends on Mg(2+) as a cofactor.

It catalyses the reaction UMP + diphosphate = 5-phospho-alpha-D-ribose 1-diphosphate + uracil. Its pathway is pyrimidine metabolism; UMP biosynthesis via salvage pathway; UMP from uracil: step 1/1. With respect to regulation, allosterically activated by GTP. In terms of biological role, catalyzes the conversion of uracil and 5-phospho-alpha-D-ribose 1-diphosphate (PRPP) to UMP and diphosphate. This chain is Uracil phosphoribosyltransferase, found in Haemophilus ducreyi (strain 35000HP / ATCC 700724).